We begin with the raw amino-acid sequence, 224 residues long: Homeobox protein Hox-B6 (224 aa).

Residues 127–132 (VYPWMQ) carry the Antp-type hexapeptide motif. The segment at residues 146 to 205 (GRRGRQTYTRYQTLELEKEFHYNRYLTRRRRIEIAHALCLTERQIKIWFQNRRMKWKKES) is a DNA-binding region (homeobox). Serine 214 is subject to Phosphoserine.

Belongs to the Antp homeobox family.

It is found in the nucleus. Functionally, sequence-specific transcription factor which is part of a developmental regulatory system that provides cells with specific positional identities on the anterior-posterior axis. The sequence is that of Homeobox protein Hox-B6 (HOXB6) from Homo sapiens (Human).